A 335-amino-acid polypeptide reads, in one-letter code: Polyprenol dehydrogenase (335 aa).

Positions 55, 208, 212, and 245 each coordinate NAD(+). Tyrosine 208 serves as the catalytic Proton acceptor.

It belongs to the short-chain dehydrogenases/reductases (SDR) family.

The protein resides in the lipid droplet. Its subcellular location is the secreted. It carries out the reaction a di-trans,poly-cis-polyprenol + NAD(+) = a di-trans,poly-cis-polyprenal + NADH + H(+). It catalyses the reaction a di-trans,poly-cis-polyprenol + NADP(+) = a di-trans,poly-cis-polyprenal + NADPH + H(+). The enzyme catalyses a di-trans,poly-cis-dolichol + NADP(+) = a di-trans,poly-cis-dolichal + NADPH + H(+). The catalysed reaction is a di-trans,poly-cis-dolichol + NAD(+) = a di-trans,poly-cis-dolichal + NADH + H(+). The protein operates within protein modification; protein glycosylation. Its function is as follows. Oxidoreductase that plays a key role in early steps of protein N-linked glycosylation by mediating two non-consecutive steps in dolichol biosynthesis. Acts both as a NAD(+)-dependent dehydrogenase and as a NADPH-dependent reductase during the conversion of polyprenol into dolichol. First catalyzes the NAD(+)-dependent dehydrogenation of polyprenol into polyprenal; polyprenal is then reduced into dolichal by SRD5A3. It then catalyzes the NADPH-dependent reduction of dolichal into dolichol. May also acts as a positive regulator of starvation-induced autophagy. The sequence is that of Polyprenol dehydrogenase (Dhrsx) from Mus musculus (Mouse).